Reading from the N-terminus, the 442-residue chain is tRNA modification GTPase MnmE (442 aa).

Residues arginine 24, glutamate 82, and lysine 122 each coordinate (6S)-5-formyl-5,6,7,8-tetrahydrofolate. Positions 219 to 366 constitute a TrmE-type G domain; it reads GFKVALVGEP…LRRALKREIE (148 aa). Residue asparagine 229 coordinates K(+). GTP is bound by residues 229–234, 248–254, and 273–276; these read NAGKST, TDIAGTT, and DTAG. Serine 233 provides a ligand contact to Mg(2+). Residues threonine 248, isoleucine 250, and threonine 253 each coordinate K(+). Position 254 (threonine 254) interacts with Mg(2+). Position 442 (lysine 442) interacts with (6S)-5-formyl-5,6,7,8-tetrahydrofolate.

This sequence belongs to the TRAFAC class TrmE-Era-EngA-EngB-Septin-like GTPase superfamily. TrmE GTPase family. Homodimer. Heterotetramer of two MnmE and two MnmG subunits. Requires K(+) as cofactor.

It is found in the cytoplasm. Functionally, exhibits a very high intrinsic GTPase hydrolysis rate. Involved in the addition of a carboxymethylaminomethyl (cmnm) group at the wobble position (U34) of certain tRNAs, forming tRNA-cmnm(5)s(2)U34. The polypeptide is tRNA modification GTPase MnmE (Agrobacterium fabrum (strain C58 / ATCC 33970) (Agrobacterium tumefaciens (strain C58))).